Here is a 799-residue protein sequence, read N- to C-terminus: RasGAP-activating-like protein 1 (799 aa).

2 C2 domains span residues 1-105 and 116-231; these read MAKS…DSWI and VQGE…NGWF. Ca(2+) contacts are provided by D21, D27, D74, D76, D82, D149, D155, D202, D204, and D210. Residues 316 to 544 enclose the Ras-GAP domain; sequence GLAGPFLDYL…SRVRDFLDQL (229 aa). A Phosphothreonine modification is found at T400. In terms of domain architecture, PH spans 565–672; it reads TIVREGFLLK…WLSALRKASA (108 aa). The Btk-type zinc-finger motif lies at 674–710; it reads NPGKLVACHPGAFRSGRWTCCLQAERSAAGCSRTHSA. Zn(2+) is bound by residues H682, C693, C694, and C704.

It depends on Ca(2+) as a cofactor.

In terms of biological role, probable inhibitory regulator of the Ras-cyclic AMP pathway. Plays a role in dendrite formation by melanocytes. In Mus musculus (Mouse), this protein is RasGAP-activating-like protein 1.